A 97-amino-acid chain; its full sequence is Citrate lyase acyl carrier protein (97 aa).

Serine 14 is modified (O-(phosphoribosyl dephospho-coenzyme A)serine).

This sequence belongs to the CitD family. As to quaternary structure, oligomer with a subunit composition of (alpha,beta,gamma)6.

It localises to the cytoplasm. In terms of biological role, covalent carrier of the coenzyme of citrate lyase. The polypeptide is Citrate lyase acyl carrier protein (Rhodopseudomonas palustris (strain BisA53)).